We begin with the raw amino-acid sequence, 554 residues long: CTP synthase (554 aa).

The segment at Met1 to Leu279 is amidoligase domain. Residue Ser21 coordinates CTP. A UTP-binding site is contributed by Ser21. Residues Ser22–Leu27 and Asp79 each bind ATP. Residues Asp79 and Glu153 each contribute to the Mg(2+) site. CTP is bound by residues Asp160–Glu162, Lys200–Gln205, and Lys236. UTP contacts are provided by residues Lys200–Gln205 and Lys236. One can recognise a Glutamine amidotransferase type-1 domain in the interval Thr304 to Asp551. Gly367 provides a ligand contact to L-glutamine. Cys394 serves as the catalytic Nucleophile; for glutamine hydrolysis. Residues Leu395–Gln398, Glu417, and Arg478 contribute to the L-glutamine site. Active-site residues include His524 and Glu526.

The protein belongs to the CTP synthase family. As to quaternary structure, homotetramer.

The enzyme catalyses UTP + L-glutamine + ATP + H2O = CTP + L-glutamate + ADP + phosphate + 2 H(+). It catalyses the reaction L-glutamine + H2O = L-glutamate + NH4(+). The catalysed reaction is UTP + NH4(+) + ATP = CTP + ADP + phosphate + 2 H(+). Its pathway is pyrimidine metabolism; CTP biosynthesis via de novo pathway; CTP from UDP: step 2/2. With respect to regulation, allosterically activated by GTP, when glutamine is the substrate; GTP has no effect on the reaction when ammonia is the substrate. The allosteric effector GTP functions by stabilizing the protein conformation that binds the tetrahedral intermediate(s) formed during glutamine hydrolysis. Inhibited by the product CTP, via allosteric rather than competitive inhibition. Its function is as follows. Catalyzes the ATP-dependent amination of UTP to CTP with either L-glutamine or ammonia as the source of nitrogen. Regulates intracellular CTP levels through interactions with the four ribonucleotide triphosphates. This Corynebacterium kroppenstedtii (strain DSM 44385 / JCM 11950 / CIP 105744 / CCUG 35717) protein is CTP synthase.